Here is a 78-residue protein sequence, read N- to C-terminus: DNA-directed RNA polymerase subunit Rpo5 (78 aa).

It belongs to the archaeal Rpo5/eukaryotic RPB5 RNA polymerase subunit family. Part of the RNA polymerase complex.

Its subcellular location is the cytoplasm. It catalyses the reaction RNA(n) + a ribonucleoside 5'-triphosphate = RNA(n+1) + diphosphate. Functionally, DNA-dependent RNA polymerase (RNAP) catalyzes the transcription of DNA into RNA using the four ribonucleoside triphosphates as substrates. The protein is DNA-directed RNA polymerase subunit Rpo5 of Methanosarcina barkeri (strain Fusaro / DSM 804).